The chain runs to 179 residues: Large ribosomal subunit protein uL5 (179 aa).

It belongs to the universal ribosomal protein uL5 family. As to quaternary structure, part of the 50S ribosomal subunit; part of the 5S rRNA/L5/L18/L25 subcomplex. Contacts the 5S rRNA and the P site tRNA. Forms a bridge to the 30S subunit in the 70S ribosome.

Its function is as follows. This is one of the proteins that bind and probably mediate the attachment of the 5S RNA into the large ribosomal subunit, where it forms part of the central protuberance. In the 70S ribosome it contacts protein S13 of the 30S subunit (bridge B1b), connecting the 2 subunits; this bridge is implicated in subunit movement. Contacts the P site tRNA; the 5S rRNA and some of its associated proteins might help stabilize positioning of ribosome-bound tRNAs. The polypeptide is Large ribosomal subunit protein uL5 (Pseudomonas savastanoi pv. phaseolicola (strain 1448A / Race 6) (Pseudomonas syringae pv. phaseolicola (strain 1448A / Race 6))).